The sequence spans 169 residues: S-ribosylhomocysteine lyase (169 aa).

Histidine 54, histidine 58, and cysteine 128 together coordinate Fe cation.

It belongs to the LuxS family. In terms of assembly, homodimer. Requires Fe cation as cofactor.

The enzyme catalyses S-(5-deoxy-D-ribos-5-yl)-L-homocysteine = (S)-4,5-dihydroxypentane-2,3-dione + L-homocysteine. Its function is as follows. Involved in the synthesis of autoinducer 2 (AI-2) which is secreted by bacteria and is used to communicate both the cell density and the metabolic potential of the environment. The regulation of gene expression in response to changes in cell density is called quorum sensing. Catalyzes the transformation of S-ribosylhomocysteine (RHC) to homocysteine (HC) and 4,5-dihydroxy-2,3-pentadione (DPD). The chain is S-ribosylhomocysteine lyase from Shewanella sp. (strain MR-7).